The following is a 443-amino-acid chain: MDRLGSFSSDPSDKPPCRGCSSYLMEPYIKCAECGPPPFFLCLQCFTRGFEYKKHQSDHTYEIMTSDFPVLDPSWTAQEEMALLEAVMDCGFGNWQDVANQMCTKTKEECEKHYMKHFINNPLFASTLLNLKQAEEAKTADTAIPFHSADDPPRPTFDSLLSRDMAGYMPARADFIEEFDNYAEWDLRDIDFVEDDSDILHALKMAVVDIYHSRLKERQRRKKIIRDHGLINLRKFQLMERRYPKEVQDLYETMRRFARIVGPVEHDKFIESHALEFELRREIKRLQEYRTAGITNFCSARTYDHLKKTREEERLKRTMLSEVLQYIQDSSACQQWLRRQADIDSGLSPSVPMTSNSGRRSAPPLNLTGLPGTEKLNEKEKELCQMVRLVPGAYLEYKSALLNECNKQGGLRLAQARALIKIDVNKTRKIYDFLIREGYITKA.

Position 6 is a phosphoserine (Ser-6). The ZZ-type zinc-finger motif lies at 12-69; sequence SDKPPCRGCSSYLMEPYIKCAECGPPPFFLCLQCFTRGFEYKKHQSDHTYEIMTSDFP. Zn(2+)-binding residues include Cys-17, Cys-20, Cys-31, Cys-34, Cys-42, Cys-45, His-55, and His-59. The SANT domain occupies 70–122; that stretch reads VLDPSWTAQEEMALLEAVMDCGFGNWQDVANQMCTKTKEECEKHYMKHFINNP. Residues Lys-132 and Lys-138 each participate in a glycyl lysine isopeptide (Lys-Gly) (interchain with G-Cter in SUMO2) cross-link. A compositionally biased stretch (polar residues) spans 347-359; the sequence is LSPSVPMTSNSGR. Positions 347–372 are disordered; the sequence is LSPSVPMTSNSGRRSAPPLNLTGLPG. In terms of domain architecture, SWIRM spans 356 to 443; sequence NSGRRSAPPL…LIREGYITKA (88 aa). The DNA-binding element occupies 426–435; sequence KTRKIYDFLI.

In terms of assembly, interacts with GCN5 and NR3C1. Associated with the P/CAF protein in the PCAF complex. Component of the PCAF complex, at least composed of TADA2L/ADA2, TADA3L/ADA3, TAF5L/PAF65-beta, TAF6L/PAF65-alpha, TAF10/TAFII30, TAF12/TAFII20, TAF9/TAFII31 and TRRAP. Component of the ADA2A-containing complex (ATAC), composed of KAT14, KAT2A, TADA2L, TADA3L, ZZ3, MBIP, WDR5, YEATS2, CCDC101 and DR1. Interacts with CCDC134.

The protein resides in the nucleus. It is found in the chromosome. Component of the ATAC complex, a complex with histone acetyltransferase activity on histones H3 and H4. Required for the function of some acidic activation domains, which activate transcription from a distant site. Binds double-stranded DNA. Binds dinucleosomes, probably at the linker region between neighboring nucleosomes. Plays a role in chromatin remodeling. May promote TP53/p53 'Lys-321' acetylation, leading to reduced TP53 stability and transcriptional activity. May also promote XRCC6 acetylation thus facilitating cell apoptosis in response to DNA damage. This is Transcriptional adapter 2-alpha (TADA2A) from Bos taurus (Bovine).